The following is a 254-amino-acid chain: MLTLLSPAKKLLSISKHYSKETSNPLLLDKALQLVKIMKLKSVEQIADLMDLSRQLAELNYERYQNFDLKNNPMNHSYPALFLFQGDVYQGLNANSWKDEEIEYAQSHLGILSGLYGFLRPLDRIQPYRLEMGVNLENPAGKNLYAFWSKIVTNILNQILAEQSNPVLINLASTEYFKVVDEKKLSYPLVTINFYEQKNSELKMIGILAKKARGMMAKYIMQNRIDSIEQIKEFSESGYLFNKEISSPNSLNFI.

This sequence belongs to the UPF0246 family.

This Legionella pneumophila (strain Paris) protein is UPF0246 protein lpp1320.